Here is a 379-residue protein sequence, read N- to C-terminus: Carbamoyl phosphate synthase small chain (379 aa).

The interval 1 to 184 (MVSLYLENGL…LDYKPFDEKN (184 aa)) is CPSase. Serine 44, glycine 240, and glycine 242 together coordinate L-glutamine. The region spanning 188–378 (TIAVLDFGAK…VKLLENFPTR (191 aa)) is the Glutamine amidotransferase type-1 domain. Cysteine 268 functions as the Nucleophile in the catalytic mechanism. Leucine 269, glutamine 272, asparagine 310, and tyrosine 313 together coordinate L-glutamine. Residues histidine 351 and glutamate 353 contribute to the active site.

Belongs to the CarA family. In terms of assembly, composed of two chains; the small (or glutamine) chain promotes the hydrolysis of glutamine to ammonia, which is used by the large (or ammonia) chain to synthesize carbamoyl phosphate. Tetramer of heterodimers (alpha,beta)4.

The catalysed reaction is hydrogencarbonate + L-glutamine + 2 ATP + H2O = carbamoyl phosphate + L-glutamate + 2 ADP + phosphate + 2 H(+). It catalyses the reaction L-glutamine + H2O = L-glutamate + NH4(+). It participates in amino-acid biosynthesis; L-arginine biosynthesis; carbamoyl phosphate from bicarbonate: step 1/1. The protein operates within pyrimidine metabolism; UMP biosynthesis via de novo pathway; (S)-dihydroorotate from bicarbonate: step 1/3. In terms of biological role, small subunit of the glutamine-dependent carbamoyl phosphate synthetase (CPSase). CPSase catalyzes the formation of carbamoyl phosphate from the ammonia moiety of glutamine, carbonate, and phosphate donated by ATP, constituting the first step of 2 biosynthetic pathways, one leading to arginine and/or urea and the other to pyrimidine nucleotides. The small subunit (glutamine amidotransferase) binds and cleaves glutamine to supply the large subunit with the substrate ammonia. This chain is Carbamoyl phosphate synthase small chain, found in Helicobacter acinonychis (strain Sheeba).